A 382-amino-acid chain; its full sequence is Glutamyl-tRNA reductase (382 aa).

Residues 38-41, S85, 90-92, and Q96 contribute to the substrate site; these read TCNR and ENQ. Residue C39 is the Nucleophile of the active site. Residue 164–169 participates in NADP(+) binding; sequence GAGEIG.

It belongs to the glutamyl-tRNA reductase family. As to quaternary structure, homodimer.

It carries out the reaction (S)-4-amino-5-oxopentanoate + tRNA(Glu) + NADP(+) = L-glutamyl-tRNA(Glu) + NADPH + H(+). The protein operates within porphyrin-containing compound metabolism; protoporphyrin-IX biosynthesis; 5-aminolevulinate from L-glutamyl-tRNA(Glu): step 1/2. Functionally, catalyzes the NADPH-dependent reduction of glutamyl-tRNA(Glu) to glutamate 1-semialdehyde (GSA). This is Glutamyl-tRNA reductase from Methanococcus maripaludis (strain C7 / ATCC BAA-1331).